The chain runs to 411 residues: Immunity-related GTPase family M protein (411 aa).

Positions 1-21 (MKPSHKSCEAAPLLPKMPETS) are disordered. The 177-residue stretch at 77–253 (IPVSIFVTGD…PELRNTLQTD (177 aa)) folds into the IRG-type G domain. Residues 86–93 (DSGNGMSS), 111–115 (TGVVR), and 193–195 (KLD) contribute to the GTP site. The residue at position 204 (Ser204) is a Phosphoserine. 234-236 (SNL) contacts GTP. A Glycyl lysine isopeptide (Lys-Gly) (interchain with G-Cter in ubiquitin) cross-link involves residue Lys272. The segment at 352–376 (KLRLMTCTTVNALFCLFKFLPCLCH) is alpha-K amphipathic helix.

This sequence belongs to the TRAFAC class dynamin-like GTPase superfamily. IRG family. Interacts with ULK1; promoting the coassembly of ULK1 and BECN1. Interacts with BECN1; enhancing BECN1-interacting partners and influencing the composition of the BECN1 complex. Interacts with ATG16L1. Interacts with NOD2; promoting Irgm 'Lys-63'-linked polyubiquitination, which is required for interactions with the core autophagy factors. Interacts with STX17; promoting STX17 recruitment to autophagosomes. Interacts with ATG8 proteins (GABARAP, GABARAPL1, GABARAPL2, MAP1LC3A, MAP1LC3B and MAP1LC3C); promoting STX17 recruitment to autophagosomes. Interacts with TFEB; promoting association between TFEB and PPP3CB and TFEB dephosphorylation. Interacts with PPP3CB; promoting association between TFEB and PPP3CB and TFEB dephosphorylation. Interacts with NLRP3; preventing NLRP3 inflammasome assembly and promoting SQSTM1/p62-dependent autophagic degradation of NLRP3. Interacts with CGAS; promoting SQSTM1/p62-dependent autophagic degradation of CGAS. Interacts with RIGI/RIG-I; promoting SQSTM1/p62-dependent autophagic degradation of RIGI/RIG-I. Interacts with NOD1; promoting SQSTM1/p62-dependent autophagic degradation of RIGI/RIG-I. Interacts with NOD2; promoting SQSTM1/p62-dependent autophagic degradation of RIGI/RIG-I. Interacts with RIPK2; promoting SQSTM1/p62-dependent autophagic degradation of RIGI/RIG-I. Interacts with PIK3CA. Palmitoylated on C-terminal Cys residues. Palmitoylation, together with the alpha-K amphipathic helix, which binds phosphatidylinositol, mediate binding to membranes. Post-translationally, ubiquitinated via 'Lys-63'-linked polyubiquitination in a NOD2-dependent process. 'Lys-63'-linked polyubiquitination is required for interactions with the core autophagy factors. Ubiquitination at Lys-272 by the DCX(WDR77) complex, also named CLR4(WDR77) complex, in intestinal cells, leading to its degradation by the proteasome.

The protein localises to the golgi apparatus membrane. The protein resides in the cell membrane. It is found in the cytoplasmic vesicle. It localises to the phagosome membrane. Its subcellular location is the autophagosome membrane. The protein localises to the lysosome membrane. The protein resides in the late endosome membrane. It is found in the mitochondrion membrane. It localises to the cell projection. Its subcellular location is the phagocytic cup. It carries out the reaction GTP + H2O = GDP + phosphate + H(+). Immunity-related GTPase that plays important roles in innate immunity and inflammatory response. Acts as a dynamin-like protein that binds to intracellular membranes and promotes remodeling and trafficking of those membranes. Required for clearance of acute protozoan and bacterial infections by interacting with autophagy and lysosome regulatory proteins, thereby promoting the fusion of phagosomes with lysosomes for efficient degradation of cargo including microbes. Regulates selective autophagy, including xenophagy and mitophagy, both directly and indirectly. Directly regulates autophagy by acting as a molecular adapter that promotes the coassembly of the core autophagy machinery to mediate antimicrobial defense: Irgm (1) activates AMPK, which in turn phosphorylates ULK1 and BECN1 to induce autophagy, (2) promotes the coassembly of ULK1 and BECN1, enhancing BECN1-interacting partners and (3) influences the composition of the BECN1 complex, by competing with the negative regulators BCL2 and RUBCN, to trigger autophagy. Also activates autophagy by promoting recruitment of STX17 to autophagosomes. In collaboration with ATG8 proteins, regulate lysosomal biogenesis, a fundamental process for any autophagic pathway, by promoting TFEB dephosphorylation. Also modulates autophagy by assisting with autophagosome formation and preventing lysosomal deacidification. Regulates autophagy by affecting mitochondrial fusion and fission. Also involved in M1 macrophage activation for the production of proinflammatory cytokines. While activating autophagy, acts as a key negative regulator of the inflammatory and interferon responses both by (1) promoting mitophagy and (2) mediating autophagy-dependent degradation of effectors of the inflammatory response. Promotes degradation of damaged and IFNG/IFN-gamma-stressed mitochondria via mitophagy, preventing cytosolic release of ligands that activate inflammation. Negatively regulates interferon-signaling in hematopoietic stem cells, preserving hematopoietic stem cell number and function. Promotes expansion of activated CD4(+) T-cells by inhibiting IFNG/IFN-gamma signaling, thereby preventing Ifng-mediated cell death of CD4(+) T-cells. Acts as a suppressor of inflammation by promoting recruitment of inflammation effectors, such as CGAS, RIGI/RIG-I and NLRP3, to autophagosome membranes, leading to their SQSTM1/p62-dependent autophagic degradation. Also directly inhibits assembly of the NLRP3 inflammasome by preventing the association between NLRP3 and PYCARD. Acts as a negative regulator of antiviral innate immune response by suppressing the RIPK2-dependent pro-inflammatory response: mediates recruitment of RIPosomes, composed of RIPK2 and NOD1 or NOD2, to autophagosome membranes, promoting their SQSTM1/p62-dependent autophagic degradation. This chain is Immunity-related GTPase family M protein, found in Rattus norvegicus (Rat).